The sequence spans 361 residues: MKPTLRRKLEALVERHEELERLLSDPKIVSDTDRFRTYSRELAQLAPIATTLAEETRTKADLAAAETLRTDPEMRELAEQEIAIAQAHLTTLDEELQRLLIPQDPRDECNLFLEVRAGTGGDEAAIFAGNLFRMYTRYAERQRWKVEVESDTPGEHGGYKEIIARIVGRGAYSRLKFESGTHRVQRVPATESQGRIHTSAATVAIIPEADEIADISINPADLKIDTFRSSGAGGQHVNKTESAIRITHLPTGVVVESQTERSQHANRDKAMKRLKAQLIESERSQQATAEAMTRKLQVGSGDRSQRIRTYNFPQGRITDHRVENLTLYDLPNIIEGDLDPLIDRLRQEHQAEELARLSNAP.

The residue at position 235 (Gln-235) is an N5-methylglutamine. Residues 284 to 306 are disordered; it reads SQQATAEAMTRKLQVGSGDRSQR.

Belongs to the prokaryotic/mitochondrial release factor family. Post-translationally, methylated by PrmC. Methylation increases the termination efficiency of RF1.

The protein localises to the cytoplasm. Peptide chain release factor 1 directs the termination of translation in response to the peptide chain termination codons UAG and UAA. This chain is Peptide chain release factor 1, found in Xylella fastidiosa (strain 9a5c).